The sequence spans 323 residues: MFARQSLRFAQPLKQGFRKYSTEAPSKGKSSLAPIYVAVGLTGLGVGLYRYNSASAEAPPAERPKVFTGGDQGWVDLKLAQIENLSPNTKRLRFEFPDKEAVSGLHVASALLTKFKPHGAEKPVIRPYTPVSDEEQPGYLDLVVKVYPNGPMSEHLHSMNVDQRLEFKGPIPKYPWEANKHKHICLIAGGTGITPMYQLARKIFKDPEDQTKVTLVFGNVREEDILLKKELQELENTYPRRFRAFYVLDHPPKEWTGGKGYITKELLKTVLPEPKEENIKIFVCGPPGMYKSISGPKVSPKDQGELTGILAELGYSKDQVFKF.

The helical transmembrane segment at 32–48 threads the bilayer; it reads LAPIYVAVGLTGLGVGL. The region spanning 72-177 is the FAD-binding FR-type domain; sequence QGWVDLKLAQ…KGPIPKYPWE (106 aa). Position 180-215 (180-215) interacts with FAD; that stretch reads KHKHICLIAGGTGITPMYQLARKIFKDPEDQTKVTL.

Belongs to the flavoprotein pyridine nucleotide cytochrome reductase family. FAD serves as cofactor.

It is found in the mitochondrion outer membrane. The enzyme catalyses 2 Fe(III)-[cytochrome b5] + NADH = 2 Fe(II)-[cytochrome b5] + NAD(+) + H(+). May mediate the reduction of outer membrane cytochrome b5. In Neosartorya fischeri (strain ATCC 1020 / DSM 3700 / CBS 544.65 / FGSC A1164 / JCM 1740 / NRRL 181 / WB 181) (Aspergillus fischerianus), this protein is NADH-cytochrome b5 reductase 2 (mcr1).